The primary structure comprises 316 residues: 1-aminocyclopropane-1-carboxylate oxidase 4 (316 aa).

Residues 153–253 form the Fe2OG dioxygenase domain; sequence PNFGTKVSNY…RMSLASFYNP (101 aa). 3 residues coordinate Fe cation: His177, Asp179, and His234.

It belongs to the iron/ascorbate-dependent oxidoreductase family. Fe cation is required as a cofactor. In terms of tissue distribution, expressed in all of the floral organs examined apart from the sepals.

It catalyses the reaction 1-aminocyclopropane-1-carboxylate + L-ascorbate + O2 = ethene + L-dehydroascorbate + hydrogen cyanide + CO2 + 2 H2O. The protein operates within alkene biosynthesis; ethylene biosynthesis via S-adenosyl-L-methionine; ethylene from S-adenosyl-L-methionine: step 2/2. In Solanum lycopersicum (Tomato), this protein is 1-aminocyclopropane-1-carboxylate oxidase 4 (ACO4).